A 619-amino-acid chain; its full sequence is Dihydroxy-acid dehydratase (619 aa).

Position 80 (Asp80) interacts with Mg(2+). Cys121 serves as a coordination point for [2Fe-2S] cluster. Mg(2+)-binding residues include Asp122 and Lys123. Lys123 is subject to N6-carboxylysine. Cys196 is a [2Fe-2S] cluster binding site. Glu492 is a Mg(2+) binding site. Ser518 (proton acceptor) is an active-site residue.

It belongs to the IlvD/Edd family. As to quaternary structure, homodimer. [2Fe-2S] cluster serves as cofactor. It depends on Mg(2+) as a cofactor.

It catalyses the reaction (2R)-2,3-dihydroxy-3-methylbutanoate = 3-methyl-2-oxobutanoate + H2O. The enzyme catalyses (2R,3R)-2,3-dihydroxy-3-methylpentanoate = (S)-3-methyl-2-oxopentanoate + H2O. It participates in amino-acid biosynthesis; L-isoleucine biosynthesis; L-isoleucine from 2-oxobutanoate: step 3/4. It functions in the pathway amino-acid biosynthesis; L-valine biosynthesis; L-valine from pyruvate: step 3/4. Functionally, functions in the biosynthesis of branched-chain amino acids. Catalyzes the dehydration of (2R,3R)-2,3-dihydroxy-3-methylpentanoate (2,3-dihydroxy-3-methylvalerate) into 2-oxo-3-methylpentanoate (2-oxo-3-methylvalerate) and of (2R)-2,3-dihydroxy-3-methylbutanoate (2,3-dihydroxyisovalerate) into 2-oxo-3-methylbutanoate (2-oxoisovalerate), the penultimate precursor to L-isoleucine and L-valine, respectively. The chain is Dihydroxy-acid dehydratase from Bifidobacterium adolescentis (strain ATCC 15703 / DSM 20083 / NCTC 11814 / E194a).